Reading from the N-terminus, the 817-residue chain is Lon protease 1 (817 aa).

The Lon N-terminal domain occupies 18 to 216 (VPLLPLRDII…KLYELMQGEI (199 aa)). 368–375 (GPPGVGKT) contributes to the ATP binding site. Positions 604 to 785 (EDQVGIVTGL…DDVLREALVL (182 aa)) constitute a Lon proteolytic domain. Catalysis depends on residues S691 and K734. The segment at 789–817 (EEFGRKPTTDGGKLGGTTELPASPAVAPA) is disordered.

This sequence belongs to the peptidase S16 family. As to quaternary structure, homohexamer. Organized in a ring with a central cavity.

It localises to the cytoplasm. It catalyses the reaction Hydrolysis of proteins in presence of ATP.. Functionally, ATP-dependent serine protease that mediates the selective degradation of mutant and abnormal proteins as well as certain short-lived regulatory proteins. Required for cellular homeostasis and for survival from DNA damage and developmental changes induced by stress. Degrades polypeptides processively to yield small peptide fragments that are 5 to 10 amino acids long. Binds to DNA in a double-stranded, site-specific manner. The chain is Lon protease 1 from Myxococcus xanthus.